The following is a 138-amino-acid chain: Translation initiation factor 2 subunit beta (138 aa).

This sequence belongs to the eIF-2-beta/eIF-5 family. Heterotrimer composed of an alpha, a beta and a gamma chain.

In terms of biological role, eIF-2 functions in the early steps of protein synthesis by forming a ternary complex with GTP and initiator tRNA. This chain is Translation initiation factor 2 subunit beta, found in Methanococcus maripaludis (strain C6 / ATCC BAA-1332).